An 82-amino-acid chain; its full sequence is Large ribosomal subunit protein bL28 (82 aa).

Positions 1–25 (MAKVDQITKKRAMTGNTRSHALNHS) are disordered.

The protein belongs to the bacterial ribosomal protein bL28 family.

This is Large ribosomal subunit protein bL28 from Malacoplasma penetrans (strain HF-2) (Mycoplasma penetrans).